The sequence spans 116 residues: Large ribosomal subunit protein bL21c (116 aa).

The protein belongs to the bacterial ribosomal protein bL21 family. As to quaternary structure, part of the 50S ribosomal subunit.

It localises to the plastid. The protein resides in the chloroplast. Its function is as follows. This protein binds to 23S rRNA. The polypeptide is Large ribosomal subunit protein bL21c (Marchantia polymorpha (Common liverwort)).